A 299-amino-acid polypeptide reads, in one-letter code: Tyrosine recombinase XerC (299 aa).

Positions 1 to 85 (MERQLDAYCE…AVRGLYHYLN (85 aa)) constitute a Core-binding (CB) domain. Residues 106-285 (RLPKTLDTDR…DFQHLAAVYD (180 aa)) form the Tyr recombinase domain. Catalysis depends on residues R146, K170, H237, R240, and H263. Y272 (O-(3'-phospho-DNA)-tyrosine intermediate) is an active-site residue.

This sequence belongs to the 'phage' integrase family. XerC subfamily. Forms a cyclic heterotetrameric complex composed of two molecules of XerC and two molecules of XerD.

Its subcellular location is the cytoplasm. Site-specific tyrosine recombinase, which acts by catalyzing the cutting and rejoining of the recombining DNA molecules. The XerC-XerD complex is essential to convert dimers of the bacterial chromosome into monomers to permit their segregation at cell division. It also contributes to the segregational stability of plasmids. The sequence is that of Tyrosine recombinase XerC from Pseudomonas fluorescens (strain Pf0-1).